The sequence spans 385 residues: Deoxyguanosinetriphosphate triphosphohydrolase-like protein (385 aa).

The HD domain occupies 75 to 204 (RLTHSLEVAQ…INFADEIAYN (130 aa)).

Belongs to the dGTPase family. Type 2 subfamily.

The protein is Deoxyguanosinetriphosphate triphosphohydrolase-like protein of Geobacter sulfurreducens (strain ATCC 51573 / DSM 12127 / PCA).